The primary structure comprises 157 residues: MSKEIILTQEGLEELKAELKHLLKVVRPKVIEELVEARNQGDLSENADYDAARNRQAEVEARIKEVETLINRAKVIDDSKTHSTGEVKIGSTVQFVSSLDNKLKEIKIVGAIEADPFSNLISNESPIAKAIIGKKVNTTVEIKDISKPYKITIKSIK.

Positions 1–75 form a coiled coil; sequence MSKEIILTQE…VETLINRAKV (75 aa).

This sequence belongs to the GreA/GreB family.

In terms of biological role, necessary for efficient RNA polymerase transcription elongation past template-encoded arresting sites. The arresting sites in DNA have the property of trapping a certain fraction of elongating RNA polymerases that pass through, resulting in locked ternary complexes. Cleavage of the nascent transcript by cleavage factors such as GreA or GreB allows the resumption of elongation from the new 3'terminus. GreA releases sequences of 2 to 3 nucleotides. In Mycoplasma mycoides subsp. mycoides SC (strain CCUG 32753 / NCTC 10114 / PG1), this protein is Transcription elongation factor GreA.